Consider the following 447-residue polypeptide: MSTMTPAEIVSELDKHIIGQNRAKKAVAVALRNRWRRQQVDEPLRQEITPKNILMIGPTGVGKTEIARRLAKLADAPFIKIEATKFTEVGYVGRDVDSIVRDLIEISVKQTRETEMRKMRTKAEDLAEDRILDILLPGARTVGFGSGTSEASGDESNTTRQTFRKRLREGALDDKEIELDIEMQAPAMDIMGPPGMEDMTEQIRSMFANLGGGKKTRRKVKVKEALKLLTDEEASKMLNDEEVKTKAVQNVEQNGIVFLDEIDKIASRSEAGGGEVSRQGVQRDLLPLVEGTTINTKYGMVKTDHILFIASGAFHLAKPSDLIPELQGRFPIRVELDSLSVKDFESILVATDASLVKQYQALLATEDVHLEFADDGIRRLAEIAFSVNEKTENIGARRLYTVIEKLLEEVSFSAGNHTGKSVLIDAAYVDRALNDVAQDEDLSRYVL.

ATP contacts are provided by residues Ile18, Gly60–Glu65, Asp260, Glu325, and Arg397.

The protein belongs to the ClpX chaperone family. HslU subfamily. A double ring-shaped homohexamer of HslV is capped on each side by a ring-shaped HslU homohexamer. The assembly of the HslU/HslV complex is dependent on binding of ATP.

It localises to the cytoplasm. In terms of biological role, ATPase subunit of a proteasome-like degradation complex; this subunit has chaperone activity. The binding of ATP and its subsequent hydrolysis by HslU are essential for unfolding of protein substrates subsequently hydrolyzed by HslV. HslU recognizes the N-terminal part of its protein substrates and unfolds these before they are guided to HslV for hydrolysis. This chain is ATP-dependent protease ATPase subunit HslU, found in Paraburkholderia phymatum (strain DSM 17167 / CIP 108236 / LMG 21445 / STM815) (Burkholderia phymatum).